Consider the following 313-residue polypeptide: MAGHTVVQRALPNIASGSFAQSASKTSSHTSKTSYSAVVTPPSSDGNPNVWRANHLPDGLIYIIVGGTAAAIFAFIILWYAVARYMSRRVAKKTMYETNIQWRDTPSSGLYDHGDEKELYQSLVDHSDKNDARPKKSLIGLLGGGNGLGSSTSYDTVADADMDDDLIGGGYQERFNPVQDFVPSHFPRSSLFISPTLEVAQQNQQSKSVGRTNHFQNLSVTSLPSASESSSNLLDRPERTASPERKPKAYGRYHQRNRSSVGVSDHSHSRSHSRSKSASSFEMPNVNNNNKKHGTTPSRFLNNLLEGNDDGTT.

Over residues 22-37 (SASKTSSHTSKTSYSA) the composition is skewed to low complexity. The disordered stretch occupies residues 22–48 (SASKTSSHTSKTSYSAVVTPPSSDGNP). The chain crosses the membrane as a helical span at residues 59–79 (GLIYIIVGGTAAAIFAFIILW). A compositionally biased stretch (low complexity) spans 221–234 (TSLPSASESSSNLL). The disordered stretch occupies residues 221–313 (TSLPSASESS…LLEGNDDGTT (93 aa)). Positions 235 to 247 (DRPERTASPERKP) are enriched in basic and acidic residues. A compositionally biased stretch (basic residues) spans 248-257 (KAYGRYHQRN). The segment covering 285–301 (NVNNNNKKHGTTPSRFL) has biased composition (polar residues).

Belongs to the PRM5 family.

It is found in the vacuole membrane. This Zygosaccharomyces rouxii (strain ATCC 2623 / CBS 732 / NBRC 1130 / NCYC 568 / NRRL Y-229) protein is Vacuolar membrane protein ZYRO0A01628g.